A 2036-amino-acid polypeptide reads, in one-letter code: Proline-rich protein 12 (2036 aa).

Disordered regions lie at residues 210 to 283, 331 to 587, and 649 to 697; these read GGGV…RALP, CSPL…GAPG, and APSP…DPQR. Pro residues predominate over residues 223-240; that stretch reads QTPPYRPGPPDPPPPPRH. Positions 249 to 258 are enriched in low complexity; it reads ASSSAAAAAA. Ser332 and Ser340 each carry phosphoserine. The segment covering 340-365 has biased composition (low complexity); sequence SPGAGEPSKAGPSGATAGASGRATGP. 2 stretches are compositionally biased toward gly residues: residues 367-380 and 391-400; these read AAGG…GGGY and TGKGGYGAAA. Low complexity-rich tracts occupy residues 411–432 and 441–458; these read STAT…TGKA and QAYS…QAYG. Residues 479–490 are compositionally biased toward pro residues; that stretch reads PPQPPSGPPPPG. 2 stretches are compositionally biased toward polar residues: residues 493–504 and 523–537; these read TCQSYSPDQLQG and GLPT…STGH. Residues 543–558 are compositionally biased toward gly residues; that stretch reads GHGGGWGPSSLGGGGE. Ser651 is modified (phosphoserine). A compositionally biased stretch (gly residues) spans 673 to 683; that stretch reads GLGGSGGAGGP. Thr738 carries the post-translational modification Phosphothreonine. Disordered stretches follow at residues 758–850, 859–878, 886–925, and 952–1068; these read AFLQ…PLQL, LEPA…DPPG, ALEP…KAPR, and EMFG…CSTK. A compositionally biased stretch (low complexity) spans 802–817; the sequence is LPSVLSHAPSPSPSAS. Over residues 833–847 the composition is skewed to pro residues; the sequence is PQPPPPPPPPPPPMP. Ser865 bears the Phosphoserine mark. The span at 1037 to 1052 shows a compositional bias: pro residues; that stretch reads AAPPPPPPPPPPPAPA. Ser1077 and Ser1135 each carry phosphoserine. Disordered stretches follow at residues 1120 to 1260, 1294 to 1347, 1376 to 1573, and 1668 to 1840; these read RLPD…SLTR, RHPP…GGAL, TLPS…GEGI, and HRPP…PGRL. A compositionally biased stretch (low complexity) spans 1182-1194; sequence PTTAGPASASTPT. Positions 1199–1208 are enriched in basic residues; sequence KPRGRGRGRG. Over residues 1209–1223 the composition is skewed to basic and acidic residues; the sequence is RKAEEAGGTRLEPLK. N6-acetyllysine is present on Lys1223. The span at 1239-1257 shows a compositional bias: polar residues; sequence GTSSGDAISGTDHNSLDSS. Thr1304 carries the phosphothreonine modification. Pro residues-rich tracts occupy residues 1306–1317 and 1324–1338; these read PLSPPKSVPPSV and PQPP…PPPS. Position 1308 is a phosphoserine (Ser1308). 3 positions are modified to phosphoserine: Ser1381, Ser1382, and Ser1387. Composition is skewed to pro residues over residues 1420–1438 and 1458–1535; these read DGPP…PLPG and PPTP…APSP. Positions 1541 to 1553 are enriched in basic and acidic residues; that stretch reads PDTRPLHLAKKQE. At Thr1561 the chain carries Phosphothreonine. A Phosphoserine modification is found at Ser1568. Positions 1691-1703 are enriched in pro residues; it reads APPPKAPAPPPKP. 2 stretches are compositionally biased toward basic and acidic residues: residues 1704–1715 and 1737–1769; these read ETPEKTTSEKPP and PVEK…RPER. Residue Thr1705 is modified to Phosphothreonine. Residues 1817-1829 show a composition bias toward low complexity; the sequence is GSSSDSESSPGAP. A Phosphoserine modification is found at Ser1925.

Its subcellular location is the nucleus. It localises to the postsynaptic density. The protein resides in the synapse. It is found in the synaptosome. The sequence is that of Proline-rich protein 12 from Homo sapiens (Human).